Here is a 422-residue protein sequence, read N- to C-terminus: Protein FAM53B (422 aa).

Phosphoserine occurs at positions 119, 168, 170, 180, 213, and 269. 2 disordered regions span residues 193–225 and 243–269; these read GQPCQGAPGSAPCGQAGDSWSPDPHPVGGGRLD and CPPSANSTPASTPELARRSSGLARSRS. Over residues 244 to 269 the composition is skewed to low complexity; it reads PPSANSTPASTPELARRSSGLARSRS. Positions 282–285 match the Nuclear localization signal motif; the sequence is KRRR. Phosphoserine occurs at positions 335 and 344.

It belongs to the FAM53 family. In terms of assembly, interacts with CTNNB1.

The protein resides in the nucleus. In terms of biological role, acts as a regulator of Wnt signaling pathway by regulating beta-catenin (CTNNB1) nuclear localization. This Mus musculus (Mouse) protein is Protein FAM53B.